An 817-amino-acid polypeptide reads, in one-letter code: Fibroblast growth factor receptor 2 (817 aa).

An N-terminal signal peptide occupies residues 1 to 22 (MFARGWLLGALLLMTLATVSVA). At 23–377 (RPSLKIDLVN…ETDYPPDYVE (355 aa)) the chain is on the extracellular side. Ig-like C2-type domains lie at 26-126 (LKID…VNVT), 159-247 (PEKM…YTLD), and 256-358 (PILQ…AWLT). N-linked (GlcNAc...) asparagine glycosylation is found at asparagine 32, asparagine 84, and asparagine 124. Residues cysteine 63 and cysteine 108 are joined by a disulfide bond. A heparin-binding region spans residues 161–178 (KMEKKLHAVPAANTVKFR). An intrachain disulfide couples cysteine 179 to cysteine 231. N-linked (GlcNAc...) asparagine glycosylation is found at asparagine 228, asparagine 265, asparagine 297, asparagine 318, and asparagine 331. An intrachain disulfide couples cysteine 278 to cysteine 342. A helical transmembrane segment spans residues 378–398 (IAIYCIGVFLIACMVVIVVVC). Residues 399–817 (RMRTSAKKPD…YQHINGGIKT (419 aa)) lie on the Cytoplasmic side of the membrane. Residues 429-465 (TVSSDSSSSMSSSTPLVRITTRRSSAHDDPIPEYDLP) form a disordered region. A compositionally biased stretch (low complexity) spans 431–441 (SSDSSSSMSSS). A Phosphotyrosine; by autocatalysis modification is found at tyrosine 462. One can recognise a Protein kinase domain in the interval 477–766 (LTLGKPLGEG…LTLATNEEYL (290 aa)). Residues 483-491 (LGEGCFGQV), lysine 513, 561-563 (EYA), and asparagine 567 each bind ATP. Position 582 is a phosphotyrosine; by autocatalysis (tyrosine 582). Aspartate 622 (proton acceptor) is an active-site residue. Residues tyrosine 652, tyrosine 653, and tyrosine 765 each carry the phosphotyrosine; by autocatalysis modification.

It belongs to the protein kinase superfamily. Tyr protein kinase family. Fibroblast growth factor receptor subfamily. In terms of assembly, monomer. Homodimer after ligand binding. Post-translationally, autophosphorylated. Binding of FGF family members together with heparan sulfate proteoglycan or heparin promotes receptor dimerization and autophosphorylation on tyrosine residues. Autophosphorylation occurs in trans between the two FGFR molecules present in the dimer. N-glycosylated in the endoplasmic reticulum. The N-glycan chains undergo further maturation to an Endo H-resistant form in the Golgi apparatus. In terms of processing, ubiquitinated. FGFR2 is rapidly ubiquitinated after autophosphorylation, leading to internalization and degradation. Subject to degradation both in lysosomes and by the proteasome.

The protein localises to the cell membrane. It is found in the golgi apparatus. The protein resides in the cytoplasmic vesicle. The catalysed reaction is L-tyrosyl-[protein] + ATP = O-phospho-L-tyrosyl-[protein] + ADP + H(+). With respect to regulation, present in an inactive conformation in the absence of bound ligand. Ligand binding leads to dimerization and activation by autophosphorylation on tyrosine residues. Its function is as follows. Tyrosine-protein kinase that acts as a cell-surface receptor for fibroblast growth factors and plays an essential role in the regulation of cell proliferation, differentiation, migration and apoptosis, and in the regulation of embryonic development. Required for normal embryonic patterning, limb bud development, lung morphogenesis, osteogenesis and skin development. Plays an essential role in the regulation of osteoblast differentiation, proliferation and apoptosis, and is required for normal skeleton development. Promotes cell proliferation in keratinocytes and immature osteoblasts, but promotes apoptosis in differentiated osteoblasts. Phosphorylates PLCG1, FRS2 and PAK4. Ligand binding leads to the activation of several signaling cascades. Activation of PLCG1 leads to the production of the cellular signaling molecules diacylglycerol and inositol 1,4,5-trisphosphate. Phosphorylation of FRS2 triggers recruitment of GRB2, GAB1, PIK3R1 and SOS1, and mediates activation of RAS, MAPK1/ERK2, MAPK3/ERK1 and the MAP kinase signaling pathway, as well as of the AKT1 signaling pathway. FGFR2 signaling is down-regulated by ubiquitination, internalization and degradation. Mutations that lead to constitutive kinase activation or impair normal FGFR2 maturation, internalization and degradation lead to aberrant signaling. Over-expressed FGFR2 promotes activation of STAT1. The protein is Fibroblast growth factor receptor 2 (fgfr2) of Danio rerio (Zebrafish).